We begin with the raw amino-acid sequence, 535 residues long: Tetrathionate hydrolase (535 aa).

Residues 1–39 (MNLKILVGLFILGIIILSAMTFLNFTTIVAQDKGDQQPK) form the signal peptide. An N-linked (GlcNAc...) asparagine glycan is attached at N50.

The protein belongs to the tetrathionate hydrolase family. As to quaternary structure, monomer and homodimer; in equilibrium.

The protein localises to the cell surface. It carries out the reaction tetrathionate + H2O = sulfur + thiosulfate + sulfate + H(+). In terms of biological role, catalyzes the hydrolysis of tetrathionate to generate elemental sulfur, thiosulfate and sulfate. The sequence is that of Tetrathionate hydrolase from Acidianus ambivalens (Desulfurolobus ambivalens).